Reading from the N-terminus, the 209-residue chain is PRA1 family protein A3 (209 aa).

The next 4 helical transmembrane spans lie at 51–72 (LYYY…ALIT), 76–98 (AILG…AATF), 143–163 (LVFV…SCGL), and 164–184 (LWVL…ASLR).

It belongs to the PRA1 family.

Its subcellular location is the endosome membrane. In terms of biological role, may be involved in both secretory and endocytic intracellular trafficking in the endosomal/prevacuolar compartments. This Arabidopsis thaliana (Mouse-ear cress) protein is PRA1 family protein A3 (PRA1A3).